We begin with the raw amino-acid sequence, 46 residues long: Myoregulin (46 aa).

Residues 1–21 are Cytoplasmic-facing; it reads MTGKNWILISTTTPKSLEDEI. Residues 22-42 form a helical membrane-spanning segment; that stretch reads VGRLLKILFVIFVDLISIIYV. Residues 43-46 lie on the Lumenal side of the membrane; the sequence is VITS.

Homooligomer. Monomer. Interacts with ATP2A1/SERCA1. Interacts as a monomer with ATP2A2/SERCA2; the interaction inhibits ATP2A2 activity.

It is found in the sarcoplasmic reticulum membrane. In terms of biological role, inhibits the activity of ATP2A1/SERCA1 ATPase in sarcoplasmic reticulum by decreasing the apparent affinity of the ATPase for Ca(2+), thereby acting as a key regulator of skeletal muscle activity. Its high expression in adult skeletal muscle, suggests that it constitutes the predominant regulator of ATP2A1/SERCA1 in adult skeletal muscle. Also inhibits the activity of ATP2A2/SERCA2 and ATP2A3/SERCA3. The chain is Myoregulin from Homo sapiens (Human).